We begin with the raw amino-acid sequence, 381 residues long: MAINIRKTHPLLKIMNHALVDLPAPSNISLWWNFGSLLGLCLIIQILTGLFLAMHYTADISMAFSSVVHICRDVNYGWLIRNIHANGASLFFICVYLHIARGLYYGSYLYKETWNIGVILLFLLMATAFVGYVLPWGQMSFWGATVITNLLSAFPYIGDMLVQWIWGGFSVDNATLTRFFAFHFLLPFLILALTIIHLLFLHETGSNNPLGINSDADKISFHPYFSYKDLLGFFVMIFFLAVFALFMPNLLGDAENFIPANPLVTPPHIKPEWYFLFAYAILRSIPNKLGGVLALLFSIFILMLVPLLHTSKQRSTIFRPMTQIFFWLLVANSIILTWIGGQPVEQPFIMVGQIASISYFSLFLIIMPLTSWWENKILSLN.

The next 4 membrane-spanning stretches (helical) occupy residues 34–54, 78–99, 114–134, and 179–199; these read FGSLLGLCLIIQILTGLFLAM, WLIRNIHANGASLFFICVYLHI, WNIGVILLFLLMATAFVGYVL, and FFAFHFLLPFLILALTIIHLL. Residues histidine 84 and histidine 98 each coordinate heme b. 2 residues coordinate heme b: histidine 183 and histidine 197. Histidine 202 is a binding site for a ubiquinone. Helical transmembrane passes span 227 to 247, 289 to 309, 321 to 341, and 348 to 368; these read YKDLLGFFVMIFFLAVFALFM, LGGVLALLFSIFILMLVPLLH, MTQIFFWLLVANSIILTWIGG, and FIMVGQIASISYFSLFLIIMP.

The protein belongs to the cytochrome b family. As to quaternary structure, the cytochrome bc1 complex contains 3 respiratory subunits (MT-CYB, CYC1 and UQCRFS1), 2 core proteins (UQCRC1 and UQCRC2) and probably 6 low-molecular weight proteins. It depends on heme b as a cofactor.

It localises to the mitochondrion inner membrane. Its function is as follows. Component of the ubiquinol-cytochrome c reductase complex (complex III or cytochrome b-c1 complex) that is part of the mitochondrial respiratory chain. The b-c1 complex mediates electron transfer from ubiquinol to cytochrome c. Contributes to the generation of a proton gradient across the mitochondrial membrane that is then used for ATP synthesis. The chain is Cytochrome b (mt-cyb) from Carcharhinus plumbeus (Sandbar shark).